Reading from the N-terminus, the 138-residue chain is Large ribosomal subunit protein uL16 (138 aa).

Positions Met-1–Gly-16 are enriched in basic residues. The tract at residues Met-1 to Gly-24 is disordered.

It belongs to the universal ribosomal protein uL16 family. As to quaternary structure, part of the 50S ribosomal subunit.

In terms of biological role, binds 23S rRNA and is also seen to make contacts with the A and possibly P site tRNAs. This is Large ribosomal subunit protein uL16 from Frankia alni (strain DSM 45986 / CECT 9034 / ACN14a).